Reading from the N-terminus, the 229-residue chain is Endonuclease V (229 aa).

Positions 46 and 114 each coordinate Mg(2+).

It belongs to the endonuclease V family. It depends on Mg(2+) as a cofactor.

The protein localises to the cytoplasm. It catalyses the reaction Endonucleolytic cleavage at apurinic or apyrimidinic sites to products with a 5'-phosphate.. Its function is as follows. DNA repair enzyme involved in the repair of deaminated bases. Selectively cleaves double-stranded DNA at the second phosphodiester bond 3' to a deoxyinosine leaving behind the intact lesion on the nicked DNA. The polypeptide is Endonuclease V (Streptomyces avermitilis (strain ATCC 31267 / DSM 46492 / JCM 5070 / NBRC 14893 / NCIMB 12804 / NRRL 8165 / MA-4680)).